The following is a 128-amino-acid chain: Protein ApaG (128 aa).

The ApaG domain maps to 1–123 (MTSSPDITVS…FRLDIAPESG (123 aa)).

This Deinococcus radiodurans (strain ATCC 13939 / DSM 20539 / JCM 16871 / CCUG 27074 / LMG 4051 / NBRC 15346 / NCIMB 9279 / VKM B-1422 / R1) protein is Protein ApaG.